The following is a 476-amino-acid chain: RNA-splicing ligase RtcB homolog (476 aa).

Positions 90, 93, 198, 230, and 324 each coordinate Mn(2+). Residue 197-201 coordinates GMP; it reads NHYAE. GMP-binding positions include 324–325, 373–376, Ser-380, 399–402, and Lys-475; these read HN, GGTM, and HGAG. His-399 serves as the catalytic GMP-histidine intermediate.

Belongs to the RtcB family. As to quaternary structure, catalytic component of the tRNA-splicing ligase complex. Requires Mn(2+) as cofactor.

It catalyses the reaction a 3'-end 3'-phospho-ribonucleotide-RNA + a 5'-end dephospho-ribonucleoside-RNA + GTP = a ribonucleotidyl-ribonucleotide-RNA + GMP + diphosphate. It carries out the reaction a 3'-end 2',3'-cyclophospho-ribonucleotide-RNA + a 5'-end dephospho-ribonucleoside-RNA + GTP + H2O = a ribonucleotidyl-ribonucleotide-RNA + GMP + diphosphate + H(+). Functionally, catalytic subunit of the tRNA-splicing ligase complex that acts by directly joining spliced tRNA halves to mature-sized tRNAs by incorporating the precursor-derived splice junction phosphate into the mature tRNA as a canonical 3',5'-phosphodiester. May act as an RNA ligase with broad substrate specificity, and may function toward other RNAs. The protein is RNA-splicing ligase RtcB homolog of Chlamydomonas reinhardtii (Chlamydomonas smithii).